Consider the following 285-residue polypeptide: Octanoyltransferase (285 aa).

Residues 50-277 (LRTPDELWIV…NIAQRHAGDI (228 aa)) enclose the BPL/LPL catalytic domain. Substrate is bound by residues 89–96 (RGGQVTWH), 189–191 (SLG), and 202–204 (GIA). C220 (acyl-thioester intermediate) is an active-site residue.

This sequence belongs to the LipB family.

Its subcellular location is the cytoplasm. The catalysed reaction is octanoyl-[ACP] + L-lysyl-[protein] = N(6)-octanoyl-L-lysyl-[protein] + holo-[ACP] + H(+). It functions in the pathway protein modification; protein lipoylation via endogenous pathway; protein N(6)-(lipoyl)lysine from octanoyl-[acyl-carrier-protein]: step 1/2. Functionally, catalyzes the transfer of endogenously produced octanoic acid from octanoyl-acyl-carrier-protein onto the lipoyl domains of lipoate-dependent enzymes. Lipoyl-ACP can also act as a substrate although octanoyl-ACP is likely to be the physiological substrate. In Psychrobacter cryohalolentis (strain ATCC BAA-1226 / DSM 17306 / VKM B-2378 / K5), this protein is Octanoyltransferase.